The sequence spans 367 residues: Peptide chain release factor 2 (367 aa).

Glutamine 250 carries the N5-methylglutamine modification.

It belongs to the prokaryotic/mitochondrial release factor family. Methylated by PrmC. Methylation increases the termination efficiency of RF2.

It localises to the cytoplasm. Peptide chain release factor 2 directs the termination of translation in response to the peptide chain termination codons UGA and UAA. The sequence is that of Peptide chain release factor 2 from Chloroflexus aggregans (strain MD-66 / DSM 9485).